The sequence spans 87 residues: Beta-toxin CsE3 (87 aa).

Residues 1–19 (MNSLLIIAACLALIGTVWA) form the signal peptide. The LCN-type CS-alpha/beta domain occupies 20–85 (KEGYIVNYHT…VWPLPKKKCN (66 aa)). Cystine bridges form between C31/C84, C35/C60, C44/C65, and C48/C67. Residue N85 is modified to Asparagine amide.

This sequence belongs to the long (4 C-C) scorpion toxin superfamily. Sodium channel inhibitor family. Beta subfamily. In terms of tissue distribution, expressed by the venom gland.

The protein localises to the secreted. Beta toxins bind voltage-independently at site-4 of sodium channels (Nav) and shift the voltage of activation toward more negative potentials thereby affecting sodium channel activation and promoting spontaneous and repetitive firing. The protein is Beta-toxin CsE3 of Centruroides sculpturatus (Arizona bark scorpion).